Reading from the N-terminus, the 104-residue chain is Cell division protein FtsL (104 aa).

At 1–19 the chain is on the cytoplasmic side; that stretch reads MSTPNTHLLCLIATDLRKH. Residues 20–39 traverse the membrane as a helical segment; sequence FFAVLVGMLIVCSAIYNVYT. At 40–104 the chain is on the periplasmic side; the sequence is THKTRGLVTQ…KKNSVLVELR (65 aa).

Belongs to the FtsL family. In terms of assembly, part of a complex composed of FtsB, FtsL and FtsQ.

Its subcellular location is the cell inner membrane. Its function is as follows. Essential cell division protein. May link together the upstream cell division proteins, which are predominantly cytoplasmic, with the downstream cell division proteins, which are predominantly periplasmic. In Psychromonas ingrahamii (strain DSM 17664 / CCUG 51855 / 37), this protein is Cell division protein FtsL.